The chain runs to 255 residues: Shieldin complex subunit 3 (255 aa).

The segment at 33-88 (QDFPTHPLPRFIPWFPYDESKLPLKPERLPPVISEEAAESVKQYLAISEPGVKSQS) is sufficient for interaction with MAD2L2. Positions 116-135 (QTNAAHLDKNSGKEKQHKQR) are disordered.

As to quaternary structure, component of the shieldin complex, consisting of SHLD1, SHLD2, SHLD3 and MAD2L2/REV7. Within the complex, SHLD2 forms a scaffold which interacts with a SHLD3-MAD2L2 subcomplex via its N-terminus, and with SHLD1 via its C-terminus. Interacts with ASTE1.

It is found in the chromosome. Functionally, component of the shieldin complex, which plays an important role in repair of DNA double-stranded breaks (DSBs). During G1 and S phase of the cell cycle, the complex functions downstream of TP53BP1 to promote non-homologous end joining (NHEJ) and suppress DNA end resection. Mediates various NHEJ-dependent processes including immunoglobulin class-switch recombination, and fusion of unprotected telomeres. The chain is Shieldin complex subunit 3 from Mus musculus (Mouse).